Here is a 236-residue protein sequence, read N- to C-terminus: tRNA (guanine-N(7)-)-methyltransferase (236 aa).

S-adenosyl-L-methionine-binding residues include D35, E60, N87, and D113. The active site involves D113. Positions 117 and 149 each coordinate substrate.

The protein belongs to the class I-like SAM-binding methyltransferase superfamily. TrmB family.

The catalysed reaction is guanosine(46) in tRNA + S-adenosyl-L-methionine = N(7)-methylguanosine(46) in tRNA + S-adenosyl-L-homocysteine. The protein operates within tRNA modification; N(7)-methylguanine-tRNA biosynthesis. Functionally, catalyzes the formation of N(7)-methylguanine at position 46 (m7G46) in tRNA. This chain is tRNA (guanine-N(7)-)-methyltransferase, found in Prochlorococcus marinus (strain MIT 9303).